We begin with the raw amino-acid sequence, 270 residues long: Acyl-[acyl-carrier-protein]--UDP-N-acetylglucosamine O-acyltransferase (270 aa).

The protein belongs to the transferase hexapeptide repeat family. LpxA subfamily. In terms of assembly, homotrimer.

It localises to the cytoplasm. The enzyme catalyses a (3R)-hydroxyacyl-[ACP] + UDP-N-acetyl-alpha-D-glucosamine = a UDP-3-O-[(3R)-3-hydroxyacyl]-N-acetyl-alpha-D-glucosamine + holo-[ACP]. It participates in glycolipid biosynthesis; lipid IV(A) biosynthesis; lipid IV(A) from (3R)-3-hydroxytetradecanoyl-[acyl-carrier-protein] and UDP-N-acetyl-alpha-D-glucosamine: step 1/6. Its function is as follows. Involved in the biosynthesis of lipid A, a phosphorylated glycolipid that anchors the lipopolysaccharide to the outer membrane of the cell. The polypeptide is Acyl-[acyl-carrier-protein]--UDP-N-acetylglucosamine O-acyltransferase (Helicobacter pylori (strain G27)).